A 217-amino-acid chain; its full sequence is MSKITTSHVRENVKELLKYSAETKKRNFLETVELQVGLKNYDPQRDKRFSGTLKLPVCPRPNMSICIFGDAFDVDRAKSCGVDAMSVDDLKKLNKNKKLIKKLSKKYNAFIASEVLIKQVPRLLGPQLSKAGKFPTPVSHNDDLYGKVTDVRSTIKFQLKKVLCLAVAVGNVEMDEDTLVNQILMSVNFLVSLLKKNWQNVGSLVIKSTMGPAFRLY.

The protein belongs to the universal ribosomal protein uL1 family.

This Candida glabrata (strain ATCC 2001 / BCRC 20586 / JCM 3761 / NBRC 0622 / NRRL Y-65 / CBS 138) (Yeast) protein is Large ribosomal subunit protein uL1 (RPL10A).